Reading from the N-terminus, the 562-residue chain is Potassium-transporting ATPase potassium-binding subunit (562 aa).

The next 12 helical transmembrane spans lie at 6 to 26 (FLLIASFMLVLFVLSRPLGGF), 62 to 82 (YALAILCFNLLGIVLLFVLLM), 132 to 152 (GLTVQNFLSAATGIAVAFALI), 175 to 195 (LYVLLPIALIIALIFVSQGVL), 253 to 273 (FVQMLAIFLIPCALCFAFGQV), 283 to 303 (LIWAMSLIFIVAVVVVMYAEL), 327 to 347 (FGILATSLYAVVTTAASCGAV), 356 to 376 (ALGGMIPLWLMQIGEVVFGGV), 379 to 399 (GLYGMLLFVLLTVFIAGLMIG), 416 to 436 (MTALAILVTPTIVLLGTALAL), 483 to 503 (LLLAAAMFIGRFGVILPVLAI), and 524 to 544 (GLLFIGLLIGTVLLVGALTFI).

The protein belongs to the KdpA family. As to quaternary structure, the system is composed of three essential subunits: KdpA, KdpB and KdpC.

It localises to the cell inner membrane. Its function is as follows. Part of the high-affinity ATP-driven potassium transport (or Kdp) system, which catalyzes the hydrolysis of ATP coupled with the electrogenic transport of potassium into the cytoplasm. This subunit binds the periplasmic potassium ions and delivers the ions to the membrane domain of KdpB through an intramembrane tunnel. This chain is Potassium-transporting ATPase potassium-binding subunit, found in Yersinia pestis bv. Antiqua (strain Antiqua).